A 71-amino-acid polypeptide reads, in one-letter code: UPF0337 protein RPA4418 (71 aa).

The tract at residues 1 to 54 is disordered; sequence MGSTMDKIKGQANELAGKAKQGIGEATGSDKLKGEGAIQEAKGHGQQALGNAKD.

The protein belongs to the UPF0337 (CsbD) family.

The protein is UPF0337 protein RPA4418 of Rhodopseudomonas palustris (strain ATCC BAA-98 / CGA009).